A 517-amino-acid polypeptide reads, in one-letter code: Probable cytosol aminopeptidase (517 aa).

Residues Lys279 and Asp284 each coordinate Mn(2+). Lys291 is a catalytic residue. Mn(2+) is bound by residues Asp302, Asp361, and Glu363. Residue Arg365 is part of the active site.

It belongs to the peptidase M17 family. Requires Mn(2+) as cofactor.

It is found in the cytoplasm. It carries out the reaction Release of an N-terminal amino acid, Xaa-|-Yaa-, in which Xaa is preferably Leu, but may be other amino acids including Pro although not Arg or Lys, and Yaa may be Pro. Amino acid amides and methyl esters are also readily hydrolyzed, but rates on arylamides are exceedingly low.. The enzyme catalyses Release of an N-terminal amino acid, preferentially leucine, but not glutamic or aspartic acids.. In terms of biological role, presumably involved in the processing and regular turnover of intracellular proteins. Catalyzes the removal of unsubstituted N-terminal amino acids from various peptides. This is Probable cytosol aminopeptidase from Streptomyces coelicolor (strain ATCC BAA-471 / A3(2) / M145).